A 423-amino-acid chain; its full sequence is Histidine--tRNA ligase (423 aa).

It belongs to the class-II aminoacyl-tRNA synthetase family. As to quaternary structure, homodimer.

The protein localises to the cytoplasm. The catalysed reaction is tRNA(His) + L-histidine + ATP = L-histidyl-tRNA(His) + AMP + diphosphate + H(+). This is Histidine--tRNA ligase from Prochlorococcus marinus (strain MIT 9211).